The primary structure comprises 231 residues: Putative N-acetylmannosamine-6-phosphate 2-epimerase (231 aa).

Belongs to the NanE family.

It catalyses the reaction an N-acyl-D-glucosamine 6-phosphate = an N-acyl-D-mannosamine 6-phosphate. It participates in amino-sugar metabolism; N-acetylneuraminate degradation; D-fructose 6-phosphate from N-acetylneuraminate: step 3/5. In terms of biological role, converts N-acetylmannosamine-6-phosphate (ManNAc-6-P) to N-acetylglucosamine-6-phosphate (GlcNAc-6-P). This chain is Putative N-acetylmannosamine-6-phosphate 2-epimerase, found in Listeria monocytogenes serotype 4b (strain F2365).